Consider the following 89-residue polypeptide: Large ribosomal subunit protein bL31B (89 aa).

This sequence belongs to the bacterial ribosomal protein bL31 family. Type B subfamily. Part of the 50S ribosomal subunit.

The polypeptide is Large ribosomal subunit protein bL31B (Corynebacterium aurimucosum (strain ATCC 700975 / DSM 44827 / CIP 107346 / CN-1) (Corynebacterium nigricans)).